The primary structure comprises 123 residues: Small ribosomal subunit protein uS13 (123 aa).

This sequence belongs to the universal ribosomal protein uS13 family. Part of the 30S ribosomal subunit. Forms a loose heterodimer with protein S19. Forms two bridges to the 50S subunit in the 70S ribosome.

Its function is as follows. Located at the top of the head of the 30S subunit, it contacts several helices of the 16S rRNA. In the 70S ribosome it contacts the 23S rRNA (bridge B1a) and protein L5 of the 50S subunit (bridge B1b), connecting the 2 subunits; these bridges are implicated in subunit movement. Contacts the tRNAs in the A and P-sites. This chain is Small ribosomal subunit protein uS13, found in Neorickettsia sennetsu (strain ATCC VR-367 / Miyayama) (Ehrlichia sennetsu).